A 1500-amino-acid chain; its full sequence is Synaptonemal complex protein 2 (1500 aa).

Phosphoserine occurs at positions 457 and 458. Phosphothreonine is present on Thr464. Position 487 is a phosphoserine (Ser487). Thr496 carries the post-translational modification Phosphothreonine. Phosphoserine occurs at positions 500, 509, 518, and 527. Residues 512 to 548 (KAVSKTSESGMDYAASPKSRQSDGRKRWNNRANHNKT) form a disordered region. A phosphothreonine mark is found at Thr608 and Thr633. Ser646, Ser650, and Ser741 each carry phosphoserine. Residues 796 to 820 (NPSDSMMSTRKLKEPQDGSGFSKKP) form a disordered region. At Ser914 the chain carries Phosphoserine. Phosphothreonine is present on Thr916. 2 disordered regions span residues 940-1010 (LMDY…TSES) and 1029-1084 (KEET…SASV). The segment covering 948-958 (NTTKYKSRKSR) has biased composition (basic residues). Basic and acidic residues predominate over residues 977–989 (MKNDYEVVVDGRT). The segment covering 990–1000 (RLPRRATKTKK) has biased composition (basic residues). Residues 1059–1076 (PSEEQKNSSRLREGREDS) are compositionally biased toward basic and acidic residues. Residues Ser1115, Ser1117, Ser1124, Ser1133, Ser1140, Ser1144, Ser1156, Ser1159, and Ser1164 each carry the phosphoserine modification. Thr1168 is modified (phosphothreonine). 3 positions are modified to phosphoserine: Ser1183, Ser1213, and Ser1216. Positions 1208-1234 (YMEPESPESCDNHMQNKREGNHAASPL) are disordered. Residues 1217-1228 (CDNHMQNKREGN) show a composition bias toward basic and acidic residues. Residues Ser1232, Ser1275, and Ser1277 each carry the phosphoserine modification. Thr1313 bears the Phosphothreonine mark. The stretch at 1388 to 1429 (LLDELEKVEKDSQTLRDLEKELVDIEEKLVQKMRAYHRCERE) forms a coiled coil.

This sequence belongs to the SYCP2 family. As to quaternary structure, component of the lateral elements of synaptonemal complexes. Heterodimer with SYCP3. Interacts with SMC1A and SMC3. Interacts with TEX11. Phosphorylated. Detected in testis and spermatocytes (at protein level).

The protein resides in the nucleus. It localises to the chromosome. Functionally, major component of the axial/lateral elements of synaptonemal complexes (SCS) during meiotic prophase. Plays a role in the assembly of synaptonemal complexes. Required for normal meiotic chromosome synapsis during oocyte and spermatocyte development and for normal male and female fertility. Required for insertion of SYCP3 into synaptonemal complexes. May be involved in the organization of chromatin by temporarily binding to DNA scaffold attachment regions. Requires SYCP3, but not SYCP1, in order to be incorporated into the axial/lateral elements. The chain is Synaptonemal complex protein 2 (Sycp2) from Mus musculus (Mouse).